The sequence spans 284 residues: MEAIKKKMQAMKLEKDNAMDKADALEAQARDANRKADKILEEVQDLKKKPSQVETDFTTTKENLATANKNLEDKEKTLTNTESEVASLNRKVQMIEENLERSEERLGTALTKLGEASHAADEASRMCKVLENRSQQDEERMDQLTNQLKEARMLAEDADGKSDEVSRKMAQVEDDLEVAEDRVKSGDSKIMELEEELKVVGNSLKSLEVSEEKANQRVEEYKRQIKTLTVKLKEAEARAEYAEKYVKKLQKEVDRLEDELGINKDRYRALADEMDQTFAELSGY.

Positions 1–273 (MEAIKKKMQA…KDRYRALADE (273 aa)) form a coiled coil. Basic and acidic residues predominate over residues 155-171 (AEDADGKSDEVSRKMAQ). Residues 155–187 (AEDADGKSDEVSRKMAQVEDDLEVAEDRVKSGD) are disordered.

The protein belongs to the tropomyosin family. In terms of assembly, homodimer.

In terms of biological role, tropomyosin, in association with the troponin complex, plays a central role in the calcium dependent regulation of muscle contraction. This chain is Tropomyosin Lep s 1.0101, found in Lepisma saccharinum (Silverfish).